The sequence spans 365 residues: 2-aminoethylphosphonate--pyruvate transaminase (365 aa).

Residue K194 is modified to N6-(pyridoxal phosphate)lysine.

It belongs to the class-V pyridoxal-phosphate-dependent aminotransferase family. PhnW subfamily. As to quaternary structure, homodimer. Requires pyridoxal 5'-phosphate as cofactor.

It catalyses the reaction (2-aminoethyl)phosphonate + pyruvate = phosphonoacetaldehyde + L-alanine. In terms of biological role, involved in phosphonate degradation. This Bacillus cereus (strain Q1) protein is 2-aminoethylphosphonate--pyruvate transaminase.